We begin with the raw amino-acid sequence, 228 residues long: Auxin-responsive protein IAA14 (228 aa).

The EAR-like (transcriptional repression) motif lies at 8-12 (LCLGL). The region spanning 110-210 (VAFVKVSMDG…SCKRLRIMKG (101 aa)) is the PB1 domain.

The protein belongs to the Aux/IAA family. Homodimers and heterodimers. Interacts with TPL. As to expression, preferentially expressed in roots and flowers.

Its subcellular location is the nucleus. In terms of biological role, aux/IAA proteins are short-lived transcriptional factors that function as repressors of early auxin response genes at low auxin concentrations. Repression is thought to result from the interaction with auxin response factors (ARFs), proteins that bind to the auxin-responsive promoter element (AuxRE). Formation of heterodimers with ARF proteins may alter their ability to modulate early auxin response genes expression. This Arabidopsis thaliana (Mouse-ear cress) protein is Auxin-responsive protein IAA14 (IAA14).